Reading from the N-terminus, the 738-residue chain is 1,4-alpha-glucan branching enzyme GlgB (738 aa).

Aspartate 399 (nucleophile) is an active-site residue. Glutamate 452 acts as the Proton donor in catalysis.

The protein belongs to the glycosyl hydrolase 13 family. GlgB subfamily. Monomer.

It catalyses the reaction Transfers a segment of a (1-&gt;4)-alpha-D-glucan chain to a primary hydroxy group in a similar glucan chain.. It functions in the pathway glycan biosynthesis; glycogen biosynthesis. Functionally, catalyzes the formation of the alpha-1,6-glucosidic linkages in glycogen by scission of a 1,4-alpha-linked oligosaccharide from growing alpha-1,4-glucan chains and the subsequent attachment of the oligosaccharide to the alpha-1,6 position. This is 1,4-alpha-glucan branching enzyme GlgB from Chlamydia trachomatis serovar A (strain ATCC VR-571B / DSM 19440 / HAR-13).